The primary structure comprises 422 residues: Histidine--tRNA ligase (422 aa).

This sequence belongs to the class-II aminoacyl-tRNA synthetase family. As to quaternary structure, homodimer.

The protein localises to the cytoplasm. It catalyses the reaction tRNA(His) + L-histidine + ATP = L-histidyl-tRNA(His) + AMP + diphosphate + H(+). The chain is Histidine--tRNA ligase from Ruthia magnifica subsp. Calyptogena magnifica.